Reading from the N-terminus, the 593-residue chain is Polyphenol oxidase, chloroplastic (593 aa).

A compositionally biased stretch (low complexity) spans 1–13 (MTSLSPPVVTTPT). The disordered stretch occupies residues 1–34 (MTSLSPPVVTTPTVPNPATKPLSPFSQNNSQVSL). The transit peptide at 1-89 (MTSLSPPVVT…GMGTDPFAFA (89 aa)) directs the protein to the chloroplast. Over residues 24 to 34 (PFSQNNSQVSL) the composition is skewed to polar residues. Disulfide bonds link Cys100-Cys115 and Cys114-Cys176. His175, His196, His205, His327, His331, and His361 together coordinate Cu cation. The segment at residues 179–196 (CDGAYDQVGFPELELQIH) is a cross-link (2'-(S-cysteinyl)-histidine (Cys-His)).

The protein belongs to the tyrosinase family. Cu(2+) serves as cofactor.

The protein resides in the plastid. The protein localises to the chloroplast thylakoid lumen. The catalysed reaction is 2 catechol + O2 = 2 1,2-benzoquinone + 2 H2O. Functionally, catalyzes the oxidation of mono- and o-diphenols to o-diquinones. In Malus domestica (Apple), this protein is Polyphenol oxidase, chloroplastic.